Consider the following 89-residue polypeptide: Large ribosomal subunit protein bL31B (89 aa).

This sequence belongs to the bacterial ribosomal protein bL31 family. Type B subfamily. As to quaternary structure, part of the 50S ribosomal subunit.

The sequence is that of Large ribosomal subunit protein bL31B from Haemophilus ducreyi (strain 35000HP / ATCC 700724).